Reading from the N-terminus, the 41-residue chain is Large ribosomal subunit protein bL36 (41 aa).

The protein belongs to the bacterial ribosomal protein bL36 family.

In Nitrobacter winogradskyi (strain ATCC 25391 / DSM 10237 / CIP 104748 / NCIMB 11846 / Nb-255), this protein is Large ribosomal subunit protein bL36.